Reading from the N-terminus, the 545-residue chain is CTP synthase (545 aa).

An amidoligase domain region spans residues 1 to 264; sequence MQYIVVTGGV…ITRLSKLLNM (264 aa). Residue serine 12 participates in CTP binding. Serine 12 serves as a coordination point for UTP. 13 to 18 lines the ATP pocket; it reads GLGKGT. Tyrosine 53 contributes to the L-glutamine binding site. Position 70 (aspartate 70) interacts with ATP. Residues aspartate 70 and glutamate 140 each contribute to the Mg(2+) site. CTP-binding positions include 147–149, 185–190, and arginine 221; these read DIE and KTKPTQ. UTP contacts are provided by residues 185–190 and arginine 221; that span reads KTKPTQ. The region spanning 294–527 is the Glutamine amidotransferase type-1 domain; the sequence is YVDLHDAYIS…VEQALIFKHR (234 aa). Glycine 347 lines the L-glutamine pocket. Cysteine 374 serves as the catalytic Nucleophile; for glutamine hydrolysis. L-glutamine is bound by residues 375 to 378, glutamate 398, and arginine 455; that span reads LGFQ. Catalysis depends on residues histidine 500 and glutamate 502.

The protein belongs to the CTP synthase family. As to quaternary structure, homotetramer.

The enzyme catalyses UTP + L-glutamine + ATP + H2O = CTP + L-glutamate + ADP + phosphate + 2 H(+). It carries out the reaction L-glutamine + H2O = L-glutamate + NH4(+). It catalyses the reaction UTP + NH4(+) + ATP = CTP + ADP + phosphate + 2 H(+). It participates in pyrimidine metabolism; CTP biosynthesis via de novo pathway; CTP from UDP: step 2/2. Its activity is regulated as follows. Allosterically activated by GTP, when glutamine is the substrate; GTP has no effect on the reaction when ammonia is the substrate. The allosteric effector GTP functions by stabilizing the protein conformation that binds the tetrahedral intermediate(s) formed during glutamine hydrolysis. Inhibited by the product CTP, via allosteric rather than competitive inhibition. In terms of biological role, catalyzes the ATP-dependent amination of UTP to CTP with either L-glutamine or ammonia as the source of nitrogen. Regulates intracellular CTP levels through interactions with the four ribonucleotide triphosphates. The chain is CTP synthase from Thermoplasma acidophilum (strain ATCC 25905 / DSM 1728 / JCM 9062 / NBRC 15155 / AMRC-C165).